Reading from the N-terminus, the 44-residue chain is Protein PsbN (44 aa).

Residues 7-29 form a helical membrane-spanning segment; sequence VATVFVSCLVLSITGYSLYIGFG.

The protein belongs to the PsbN family.

It is found in the plastid. The protein resides in the chloroplast thylakoid membrane. Functionally, may play a role in photosystem I and II biogenesis. The sequence is that of Protein PsbN from Nephroselmis olivacea (Green alga).